The chain runs to 664 residues: Phosphomethylpyrimidine synthase (664 aa).

Polar residues-rich tracts occupy residues 1–10 (MSTEPLSINP) and 17–27 (SATQEPSTSSK). The tract at residues 1–37 (MSTEPLSINPLSAKPLSATQEPSTSSKPSRREQRAAA) is disordered. Residues N261, M290, Y319, H355, 375-377 (SRG), 416-419 (DGLR), and E455 each bind substrate. Position 459 (H459) interacts with Zn(2+). Y482 contacts substrate. Residue H523 coordinates Zn(2+). Positions 603, 606, and 611 each coordinate [4Fe-4S] cluster.

This sequence belongs to the ThiC family. As to quaternary structure, homodimer. [4Fe-4S] cluster serves as cofactor.

It carries out the reaction 5-amino-1-(5-phospho-beta-D-ribosyl)imidazole + S-adenosyl-L-methionine = 4-amino-2-methyl-5-(phosphooxymethyl)pyrimidine + CO + 5'-deoxyadenosine + formate + L-methionine + 3 H(+). Its pathway is cofactor biosynthesis; thiamine diphosphate biosynthesis. Functionally, catalyzes the synthesis of the hydroxymethylpyrimidine phosphate (HMP-P) moiety of thiamine from aminoimidazole ribotide (AIR) in a radical S-adenosyl-L-methionine (SAM)-dependent reaction. This is Phosphomethylpyrimidine synthase from Pectobacterium atrosepticum (strain SCRI 1043 / ATCC BAA-672) (Erwinia carotovora subsp. atroseptica).